The primary structure comprises 325 residues: ATP phosphoribosyltransferase (325 aa).

It belongs to the ATP phosphoribosyltransferase family. Long subfamily. The cofactor is Mg(2+).

The protein resides in the cytoplasm. The catalysed reaction is 1-(5-phospho-beta-D-ribosyl)-ATP + diphosphate = 5-phospho-alpha-D-ribose 1-diphosphate + ATP. The protein operates within amino-acid biosynthesis; L-histidine biosynthesis; L-histidine from 5-phospho-alpha-D-ribose 1-diphosphate: step 1/9. Its activity is regulated as follows. Feedback inhibited by histidine. Catalyzes the condensation of ATP and 5-phosphoribose 1-diphosphate to form N'-(5'-phosphoribosyl)-ATP (PR-ATP). Has a crucial role in the pathway because the rate of histidine biosynthesis seems to be controlled primarily by regulation of HisG enzymatic activity. In Rhodopseudomonas palustris (strain HaA2), this protein is ATP phosphoribosyltransferase.